Here is an 87-residue protein sequence, read N- to C-terminus: NADH-ubiquinone oxidoreductase chain 4L (87 aa).

Helical transmembrane passes span 1-21 (MNLSIFLFLIGILGFILNRKN), 22-42 (IILMIIAIEIMLLAVTLLVLI), and 57-77 (LYIISIAGAESVIGLSILVAF).

The protein belongs to the complex I subunit 4L family. As to quaternary structure, core subunit of respiratory chain NADH dehydrogenase (Complex I) which is composed of 45 different subunits.

Its subcellular location is the mitochondrion inner membrane. It catalyses the reaction a ubiquinone + NADH + 5 H(+)(in) = a ubiquinol + NAD(+) + 4 H(+)(out). Functionally, core subunit of the mitochondrial membrane respiratory chain NADH dehydrogenase (Complex I) which catalyzes electron transfer from NADH through the respiratory chain, using ubiquinone as an electron acceptor. The protein is NADH-ubiquinone oxidoreductase chain 4L (ND4L) of Moniliophthora perniciosa (strain FA553 / isolate CP02) (Witches'-broom disease fungus).